The following is a 252-amino-acid chain: 3-dehydroquinate dehydratase (252 aa).

Residues Ser-21, 46-48 (EWR), and Arg-82 contribute to the 3-dehydroquinate site. His-143 acts as the Proton donor/acceptor in catalysis. The active-site Schiff-base intermediate with substrate is Lys-170. 3-dehydroquinate is bound by residues Arg-213, Ser-232, and Gln-236.

Belongs to the type-I 3-dehydroquinase family. Homodimer.

The catalysed reaction is 3-dehydroquinate = 3-dehydroshikimate + H2O. It participates in metabolic intermediate biosynthesis; chorismate biosynthesis; chorismate from D-erythrose 4-phosphate and phosphoenolpyruvate: step 3/7. Its function is as follows. Involved in the third step of the chorismate pathway, which leads to the biosynthesis of aromatic amino acids. Catalyzes the cis-dehydration of 3-dehydroquinate (DHQ) and introduces the first double bond of the aromatic ring to yield 3-dehydroshikimate. The sequence is that of 3-dehydroquinate dehydratase from Escherichia coli O139:H28 (strain E24377A / ETEC).